The following is a 101-amino-acid chain: Large ribosomal subunit protein uL24 (101 aa).

Belongs to the universal ribosomal protein uL24 family. In terms of assembly, part of the 50S ribosomal subunit.

One of two assembly initiator proteins, it binds directly to the 5'-end of the 23S rRNA, where it nucleates assembly of the 50S subunit. Functionally, one of the proteins that surrounds the polypeptide exit tunnel on the outside of the subunit. In Dinoroseobacter shibae (strain DSM 16493 / NCIMB 14021 / DFL 12), this protein is Large ribosomal subunit protein uL24.